Consider the following 119-residue polypeptide: UPF0292 protein TV1259 (119 aa).

The Toprim domain maps to 11-93 (SIPIIVEGRN…YVDLYLWNFI (83 aa)). E17, D62, and D64 together coordinate Mg(2+).

It belongs to the UPF0292 family. Mg(2+) serves as cofactor.

In Thermoplasma volcanium (strain ATCC 51530 / DSM 4299 / JCM 9571 / NBRC 15438 / GSS1), this protein is UPF0292 protein TV1259.